The chain runs to 406 residues: Imidazolonepropionase (406 aa).

H72 and H74 together coordinate Fe(3+). H72 and H74 together coordinate Zn(2+). 4-imidazolone-5-propanoate is bound by residues R81, Y144, and H177. Y144 contributes to the N-formimidoyl-L-glutamate binding site. H242 is a binding site for Fe(3+). H242 lines the Zn(2+) pocket. Q245 contributes to the 4-imidazolone-5-propanoate binding site. Residue D317 coordinates Fe(3+). D317 contacts Zn(2+). The N-formimidoyl-L-glutamate site is built by N319 and G321. T322 is a 4-imidazolone-5-propanoate binding site.

The protein belongs to the metallo-dependent hydrolases superfamily. HutI family. Requires Zn(2+) as cofactor. Fe(3+) serves as cofactor.

It is found in the cytoplasm. It catalyses the reaction 4-imidazolone-5-propanoate + H2O = N-formimidoyl-L-glutamate. The protein operates within amino-acid degradation; L-histidine degradation into L-glutamate; N-formimidoyl-L-glutamate from L-histidine: step 3/3. In terms of biological role, catalyzes the hydrolytic cleavage of the carbon-nitrogen bond in imidazolone-5-propanoate to yield N-formimidoyl-L-glutamate. It is the third step in the universal histidine degradation pathway. This is Imidazolonepropionase from Yersinia enterocolitica serotype O:8 / biotype 1B (strain NCTC 13174 / 8081).